Here is a 255-residue protein sequence, read N- to C-terminus: GTP cyclohydrolase III 1 (255 aa).

This sequence belongs to the archaeal-type GTP cyclohydrolase family.

It catalyses the reaction GTP + 3 H2O = 2-amino-5-formylamino-6-(5-phospho-D-ribosylamino)pyrimidin-4(3H)-one + 2 phosphate + 2 H(+). Catalyzes the formation of 2-amino-5-formylamino-6-ribofuranosylamino-4(3H)-pyrimidinone ribonucleotide monophosphate and inorganic phosphate from GTP. Also has an independent pyrophosphate phosphohydrolase activity. The polypeptide is GTP cyclohydrolase III 1 (gch31) (Halobacterium salinarum (strain ATCC 700922 / JCM 11081 / NRC-1) (Halobacterium halobium)).